The primary structure comprises 305 residues: Ribonuclease BN (305 aa).

Residues His64, His66, Asp68, His69, His141, Asp212, and His270 each coordinate Zn(2+). Residue Asp68 is the Proton acceptor of the active site.

It belongs to the RNase Z family. RNase BN subfamily. In terms of assembly, homodimer. Zn(2+) serves as cofactor.

In terms of biological role, zinc phosphodiesterase, which has both exoribonuclease and endoribonuclease activities. The chain is Ribonuclease BN from Enterobacter sp. (strain 638).